Consider the following 783-residue polypeptide: Cadherin-5 (783 aa).

The N-terminal stretch at 1–25 is a signal peptide; that stretch reads MQALVMLLATGATYYLGLLAAAAAA. Positions 26–45 are excised as a propeptide; that stretch reads VNPGRPNTPGSLPAHRRQKR. 5 Cadherin domains span residues 44–149, 150–256, 257–371, 372–478, and 478–585; these read KRDW…WPVF, THRV…FPIF, TQNR…PPIF, QQPF…APEF, and FAKP…GEFT. The Extracellular portion of the chain corresponds to 46 to 599; that stretch reads DWIWNQMHID…AAAQVGISIQ (554 aa). Ca(2+) contacts are provided by Glu56 and Glu57. Asn59 is a glycosylation site (N-linked (GlcNAc...) asparagine). Positions 107, 109, 141, 142, 143, 144, and 145 each coordinate Ca(2+). Residue Asn155 is glycosylated (N-linked (GlcNAc...) asparagine). Ca(2+) contacts are provided by Asp175, Asp177, His184, and Asp229. Asn361, Asn441, and Asn523 each carry an N-linked (GlcNAc...) asparagine glycan. A helical membrane pass occupies residues 600–620; the sequence is ALVAIFLCILTFTVITLLIIL. Residues 621-660 form a required for interaction with PALS1 region; it reads RRRLRKQARAHGKSVPEIHEQLVTYDEEGGGEMDTTSYDV. Residues 621–783 are Cytoplasmic-facing; sequence RRRLRKQARA…GSDPQEELVY (163 aa).

Part of a complex composed of AMOTL2, MAGI1 and CDH5, within the complex AMOTL2 acts as a scaffold protein for the interaction of MAGI1 with CDH5. The complex is required for coupling actin fibers to cell junctions in endothelial cells. Within the complex AMOTL2 (via its N-terminus) interacts with CDH5. Interacts (via cadherin 5 domain) with PTPRB. Interacts with TRPC4. Interacts with KRIT1. Interacts with PARD3. Interacts with RTN4 (isoform B). Interacts with PALS1; the interaction promotes PALS1 localization to cell junctions and is required for CDH5-mediated vascular lumen formation and endothelial cell. Interacts with CTNND1/p120-catenin; the interaction controls CADH5 endocytosis. In terms of processing, phosphorylated on tyrosine residues by KDR/VEGFR-2. Dephosphorylated by PTPRB. O-glycosylated.

It localises to the cell junction. The protein resides in the adherens junction. The protein localises to the cell membrane. It is found in the cytoplasm. Its function is as follows. Cadherins are calcium-dependent cell adhesion proteins. They preferentially interact with themselves in a homophilic manner in connecting cells; cadherins may thus contribute to the sorting of heterogeneous cell types. This cadherin may play a important role in endothelial cell biology through control of the cohesion and organization of the intercellular junctions. It associates with alpha-catenin forming a link to the cytoskeleton. Plays a role in coupling actin fibers to cell junctions in endothelial cells, via acting as a cell junctional complex anchor for AMOTL2 and MAGI1. Acts in concert with KRIT1 and PALS1 to establish and maintain correct endothelial cell polarity and vascular lumen. These effects are mediated by recruitment and activation of the Par polarity complex and RAP1B. Required for activation of PRKCZ and for localization of phosphorylated PRKCZ, PARD3, TIAM1 and RAP1B to the cell junction. Associates with CTNND1/p120-catenin to control CADH5 endocytosis. This is Cadherin-5 from Bos taurus (Bovine).